The chain runs to 273 residues: Undecaprenyl-diphosphatase (273 aa).

6 consecutive transmembrane segments (helical) span residues 43–63 (IGNV…CWEY), 82–102 (KFVL…VLLI), 109–129 (LFNP…ILWA), 185–205 (TEFS…YDVL), 214–234 (ADLP…FVAV), and 249–269 (FAWY…LGWI).

The protein belongs to the UppP family.

The protein localises to the cell inner membrane. The catalysed reaction is di-trans,octa-cis-undecaprenyl diphosphate + H2O = di-trans,octa-cis-undecaprenyl phosphate + phosphate + H(+). Its function is as follows. Catalyzes the dephosphorylation of undecaprenyl diphosphate (UPP). Confers resistance to bacitracin. The polypeptide is Undecaprenyl-diphosphatase (Laribacter hongkongensis (strain HLHK9)).